Consider the following 200-residue polypeptide: Probable GTP-binding protein EngB (200 aa).

The 175-residue stretch at S26 to K200 folds into the EngB-type G domain. GTP-binding positions include G34 to S41, G61 to Q65, D80 to G83, T147 to D150, and V179 to S181. Mg(2+)-binding residues include S41 and T63.

It belongs to the TRAFAC class TrmE-Era-EngA-EngB-Septin-like GTPase superfamily. EngB GTPase family. Mg(2+) serves as cofactor.

In terms of biological role, necessary for normal cell division and for the maintenance of normal septation. This chain is Probable GTP-binding protein EngB, found in Ehrlichia ruminantium (strain Gardel).